Reading from the N-terminus, the 506-residue chain is AMP phosphorylase (506 aa).

Residues glycine 167, 193–198, and threonine 202 contribute to the AMP site; that span reads SRAITG. The active-site Proton donor is the aspartate 255. Residues serine 263 and lysine 287 each coordinate AMP.

Belongs to the thymidine/pyrimidine-nucleoside phosphorylase family. Type 2 subfamily.

The catalysed reaction is AMP + phosphate = alpha-D-ribose 1,5-bisphosphate + adenine. The enzyme catalyses CMP + phosphate = cytosine + alpha-D-ribose 1,5-bisphosphate. It catalyses the reaction UMP + phosphate = alpha-D-ribose 1,5-bisphosphate + uracil. Functionally, catalyzes the conversion of AMP and phosphate to adenine and ribose 1,5-bisphosphate (R15P). Exhibits phosphorylase activity toward CMP and UMP in addition to AMP. Functions in an archaeal AMP degradation pathway, together with R15P isomerase and RubisCO. In Methanosarcina barkeri (strain Fusaro / DSM 804), this protein is AMP phosphorylase.